The chain runs to 310 residues: Methionyl-tRNA formyltransferase (310 aa).

Residue 111–114 (SILP) coordinates (6S)-5,6,7,8-tetrahydrofolate.

The protein belongs to the Fmt family.

It carries out the reaction L-methionyl-tRNA(fMet) + (6R)-10-formyltetrahydrofolate = N-formyl-L-methionyl-tRNA(fMet) + (6S)-5,6,7,8-tetrahydrofolate + H(+). Functionally, attaches a formyl group to the free amino group of methionyl-tRNA(fMet). The formyl group appears to play a dual role in the initiator identity of N-formylmethionyl-tRNA by promoting its recognition by IF2 and preventing the misappropriation of this tRNA by the elongation apparatus. The sequence is that of Methionyl-tRNA formyltransferase from Methylobacterium sp. (strain 4-46).